We begin with the raw amino-acid sequence, 153 residues long: Large ribosomal subunit protein uL15 (153 aa).

Positions 15–42 (ARRIVGRGSSSGRGTTSGRGTKGQQARA) are disordered. Positions 23-35 (SSSGRGTTSGRGT) are enriched in gly residues.

The protein belongs to the universal ribosomal protein uL15 family. Part of the 50S ribosomal subunit.

Its function is as follows. Binds to the 23S rRNA. This is Large ribosomal subunit protein uL15 from Treponema pallidum (strain Nichols).